A 93-amino-acid chain; its full sequence is Envelope small membrane protein (93 aa).

Residues 1 to 11 are Virion surface-facing; it reads MMNLLNKSLEE. The chain crosses the membrane as a helical span at residues 12 to 32; that stretch reads NGSVLTAFYIFVAFVALYLLG. Topologically, residues 33 to 93 are intravirion; sequence RALQAFVQAA…NEFPKNGWKQ (61 aa).

This sequence belongs to the gammacoronaviruses E protein family. In terms of assembly, homooligomer. Interacts with the M membrane protein in the budding compartment of the host cell, which is located between endoplasmic reticulum and the Golgi complex. The cytoplasmic tails of both proteins are important for this function. Interacts with Nucleoprotein.

The protein resides in the host Golgi apparatus membrane. In terms of biological role, plays a central role in virus morphogenesis and assembly. Acts as a viroporin and self-assembles in host membranes forming pentameric protein-lipid pores that allow ion transport. Also plays a role in the induction of apoptosis. This is Envelope small membrane protein from Avian infectious bronchitis virus (strain Portugal/322/82) (IBV).